The sequence spans 107 residues: Quaternary ammonium compound-resistance protein QacC (107 aa).

Residues 1 to 2 lie on the Cytoplasmic side of the membrane; the sequence is MP. A helical membrane pass occupies residues 3–20; it reads YIYLIIAISTEVIGSAFL. The Extracellular portion of the chain corresponds to 21 to 29; the sequence is KSSEGFSKF. A helical membrane pass occupies residues 30–47; it reads IPSLGTIISFGICFYFLS. Residues 48–56 lie on the Cytoplasmic side of the membrane; the sequence is KTMQHLPLN. Residues 57-75 form a helical membrane-spanning segment; that stretch reads ITYATWAGLGLVLTTVVSI. The Extracellular portion of the chain corresponds to 76 to 85; sequence IIFKEQINLI. The chain crosses the membrane as a helical span at residues 86-103; it reads TIVSIVLIIVGVVSLNIF. The Cytoplasmic segment spans residues 104-107; it reads GTSH.

This sequence belongs to the drug/metabolite transporter (DMT) superfamily. Small multidrug resistance (SMR) (TC 2.A.7.1) family.

Its subcellular location is the cell membrane. With respect to regulation, ethidium export is inhibited by N-ethylmaleimide (NEM). Multidrug exporter. Is implicated for the resistance to bacteriocidal quaternary ammonium compounds and ethidium bromide. In Staphylococcus aureus, this protein is Quaternary ammonium compound-resistance protein QacC.